Reading from the N-terminus, the 69-residue chain is Conotoxin Lp3.1 (69 aa).

Positions 1–20 (MLKMGVLLFIFLVLFPLTTL) are cleaved as a signal peptide. A propeptide spanning residues 21–54 (ELDTDRPVERHAAIKQDLKPQERRGIRLHAPRDE) is cleaved from the precursor. Disulfide bonds link Cys55/Cys67, Cys56/Cys65, and Cys61/Cys68.

The protein belongs to the conotoxin M superfamily. In terms of tissue distribution, expressed by the venom duct.

Its subcellular location is the secreted. The sequence is that of Conotoxin Lp3.1 from Conus leopardus (Leopard cone).